The chain runs to 286 residues: Putative 2-aminoethylphosphonate transport system permease protein PhnU (286 aa).

6 helical membrane passes run W19–V39, F76–I96, F111–G131, F150–M170, V202–T222, and Y254–L274. In terms of domain architecture, ABC transmembrane type-1 spans L68–Y275.

Belongs to the binding-protein-dependent transport system permease family.

It is found in the cell inner membrane. In terms of biological role, probably part of the PhnSTUV complex (TC 3.A.1.11.5) involved in 2-aminoethylphosphonate import. Probably responsible for the translocation of the substrate across the membrane. This is Putative 2-aminoethylphosphonate transport system permease protein PhnU (phnU) from Salmonella choleraesuis (strain SC-B67).